Consider the following 429-residue polypeptide: 46 kDa membrane protein (429 aa).

The next 9 membrane-spanning stretches (helical) occupy residues 26-46 (AALT…EDVF), 51-71 (TGID…VSVL), 99-119 (LVLV…VLLI), 173-193 (FLIH…ALLP), 224-244 (LLIK…AHPV), 279-299 (TLLF…TDVV), 315-335 (LLTV…IDNI), 360-380 (ILWW…AVGA), and 407-427 (IAVT…RYLV).

The protein belongs to the CitM (TC 2.A.11) transporter family.

It is found in the cell membrane. The chain is 46 kDa membrane protein (ag45) from Mycobacterium leprae (strain TN).